The primary structure comprises 747 residues: Meprin A subunit alpha (747 aa).

The signal sequence occupies residues 1–20 (MLWIQPACLLSLIFSAHIAA). The propeptide occupies 21–64 (VSIKHLLNGSDHDTDVGEQKDIFEINLAAGLNLFQGDILLPRTR). N-linked (GlcNAc...) asparagine glycosylation is found at Asn-28 and Asn-139. Residues 65–259 (NAMRDPSSRW…IRLNRMYNCT (195 aa)) form the Peptidase M12A domain. The Extracellular portion of the chain corresponds to 65 to 713 (NAMRDPSSRW…FYAGERCQAM (649 aa)). 3 disulfide bridges follow: Cys-106–Cys-258, Cys-127–Cys-146, and Cys-268–Cys-430. Residue His-154 participates in Zn(2+) binding. Residue Glu-155 is part of the active site. Zn(2+) contacts are provided by His-158 and His-164. Asn-221, Asn-257, Asn-317, Asn-413, Asn-439, Asn-533, and Asn-540 each carry an N-linked (GlcNAc...) asparagine glycan. One can recognise an MAM domain in the interval 263-432 (TLLDHCDFEK…ITLTETPCPA (170 aa)). Residues 433–594 (GVWTIRNISQ…GDSLIIFVDF (162 aa)) form the MATH domain. Positions 638-663 (ESLPSSLGQRHPSRQKRSVENTGPME) are disordered. Residues 671–711 (FRDPCDPNPCQNEGTCVNVKGMASCRCVSGHAFFYAGERCQ) enclose the EGF-like domain. Disulfide bonds link Cys-675/Cys-686, Cys-680/Cys-695, and Cys-697/Cys-710. Residues 714–741 (HVHGSLLGLLIGCIAGLIFLTFVTFSTT) traverse the membrane as a helical segment. The Cytoplasmic portion of the chain corresponds to 742-747 (NGKLRQ).

As to quaternary structure, homotetramer consisting of disulfide-linked alpha subunits, homooligomer consisting of disulfide-linked alpha subunit homodimers, or heterotetramer of two alpha and two beta subunits formed by non-covalent association of two disulfide-linked heterodimers. Genetic factors determine which oligomer(s) will be formed (strain-specific). Interacts with MBL2 through its carbohydrate moiety. This interaction may inhibit its catalytic activity. Zn(2+) serves as cofactor. Post-translationally, N-glycosylated; contains GlcNAc, galactose, mannose and a small amount of fucose. Kidney, intestinal brush borders and salivary ducts.

The protein localises to the membrane. It catalyses the reaction Hydrolysis of protein and peptide substrates preferentially on carboxyl side of hydrophobic residues.. With respect to regulation, inhibited by metal ion chelators EDTA and 1,10-phenanthroline, bradykinin analogs, cysteine, CONA65, and several hydroxamate compounds, particularly tyrosine hydroxamate. Not inhibited by 3,4-dichloroisocourmarin, soybean trypsin inhibitor, or the cysteine proteinase inhibitors iodoacetic acid and E-64. In Mus musculus (Mouse), this protein is Meprin A subunit alpha (Mep1a).